Reading from the N-terminus, the 68-residue chain is Probable tautomerase Cj0270 (68 aa).

The active-site Proton acceptor; via imino nitrogen is Pro2.

The protein belongs to the 4-oxalocrotonate tautomerase family.

This is Probable tautomerase Cj0270 from Campylobacter jejuni subsp. jejuni serotype O:2 (strain ATCC 700819 / NCTC 11168).